Here is a 159-residue protein sequence, read N- to C-terminus: MQQGWLSNWLVKHEVVHRSLGFDHRGIETLQIKAGDWDSIAVILYVYGYNYLRSQCAYDVAPGGSLASVYHLTRIQYGIDNPEEVCIKVFAQKDNPRIPSVFWIWRSADFQERESYDMVGISYDNHPRLKRILMPESWIGWPLRKDYITPNFYEIQDAH.

The protein belongs to the complex I 30 kDa subunit family. NDH is composed of at least 16 different subunits, 5 of which are encoded in the nucleus.

It localises to the plastid. Its subcellular location is the chloroplast thylakoid membrane. It catalyses the reaction a plastoquinone + NADH + (n+1) H(+)(in) = a plastoquinol + NAD(+) + n H(+)(out). It carries out the reaction a plastoquinone + NADPH + (n+1) H(+)(in) = a plastoquinol + NADP(+) + n H(+)(out). NDH shuttles electrons from NAD(P)H:plastoquinone, via FMN and iron-sulfur (Fe-S) centers, to quinones in the photosynthetic chain and possibly in a chloroplast respiratory chain. The immediate electron acceptor for the enzyme in this species is believed to be plastoquinone. Couples the redox reaction to proton translocation, and thus conserves the redox energy in a proton gradient. This Triticum aestivum (Wheat) protein is NAD(P)H-quinone oxidoreductase subunit J, chloroplastic.